The chain runs to 391 residues: Putative F-box protein At1g47730 (391 aa).

Residues 1–12 (MEQREEKTENIQ) are compositionally biased toward basic and acidic residues. Residues 1–25 (MEQREEKTENIQRKRSRGKSSSSSL) are disordered. Positions 19 to 68 (KSSSSSLPLDLTSEIFSRLPAKSVVRFRCVSKLWSSITTAPYFTNSFETR) constitute an F-box domain.

The sequence is that of Putative F-box protein At1g47730 from Arabidopsis thaliana (Mouse-ear cress).